The primary structure comprises 327 residues: Cyclic AMP-responsive element-binding protein 1 (327 aa).

Disordered stretches follow at residues 1–29 (MTMD…TVQA) and 94–113 (SEDS…RREI). Residues 8 to 146 (DNQQSGDAAV…IEEEKSEEET (139 aa)) form the KID domain. Residues 20–29 (AESQQMTVQA) are compositionally biased toward polar residues. A Phosphoserine; by CaMK1, CaMK2, CaMK4, PKB/AKT1 or PKB/AKT2, RPS6KA3, RPS6KA4, RPS6KA5 and SGK1 modification is found at serine 119. Residue lysine 122 forms a Glycyl lysine isopeptide (Lys-Gly) (interchain with G-Cter in SUMO2) linkage. Residues 126 to 149 (DLSSDAPGVPRIEEEKSEEETSAP) are disordered. Serine 128 carries the phosphoserine; by CaMK2 modification. Residue serine 257 is modified to Phosphoserine; by HIPK2. The bZIP domain occupies 269-327 (ARKREVRLMKNREAARECRRKKKEYVKCLENRVAVLENQNKTLIEELKALKDLYCHKSD). The segment at 270-295 (RKREVRLMKNREAARECRRKKKEYVK) is basic motif. Residues lysine 271 and lysine 290 each participate in a glycyl lysine isopeptide (Lys-Gly) (interchain with G-Cter in SUMO1) cross-link. The interval 297 to 318 (LENRVAVLENQNKTLIEELKAL) is leucine-zipper.

Belongs to the bZIP family. In terms of assembly, interacts with PPRC1. Binds DNA as a dimer. This dimer is stabilized by magnesium ions. Interacts, through the bZIP domain, with the coactivators CRTC1/TORC1, CRTC2/TORC2 and CRTC3/TORC3. When phosphorylated on Ser-119, binds CREBBP. Interacts with CREBL2; regulates CREB1 phosphorylation, stability and transcriptional activity. Interacts (phosphorylated form) with TOX3. Interacts with ARRB1. Binds to HIPK2. Interacts with SGK1. Interacts with TSSK4; this interaction facilitates phosphorylation on Ser-119. Forms a complex with KMT2A and CREBBP. Interacts with TOX4; CREB1 is required for full induction of TOX4-dependent activity and the interaction is increased by cAMP and inhibited by insulin. Phosphorylation of Ser-119 allows CREBBP binding. Stimulated by phosphorylation. Phosphorylation of both Ser-128 and Ser-119 in the SCN regulates the activity of CREB and participate in circadian rhythm generation. Phosphorylated upon calcium influx by CaMK4 and CaMK2 on Ser-119. CaMK4 is much more potent than CaMK2 in activating CREB. Phosphorylated by CaMK2 on Ser-128. Phosphorylation of Ser-128 blocks CREB-mediated transcription even when Ser-119 is phosphorylated. Phosphorylated by CaMK1. Phosphorylation of Ser-257 by HIPK2 in response to genotoxic stress promotes CREB1 activity, facilitating the recruitment of the coactivator CBP. Phosphorylated at Ser-119 by RPS6KA3, RPS6KA4 and RPS6KA5 in response to mitogenic or stress stimuli. CREBL2 positively regulates phosphorylation at Ser-119 thereby stimulating CREB1 transcriptional activity. In liver, phosphorylation is induced by fasting or glucagon in a circadian fashion. Phosphorylated by TSSK4 on Ser-119. In terms of processing, sumoylated with SUMO1. Sumoylation on Lys-290, but not on Lys-271, is required for nuclear localization of this protein. Sumoylation is enhanced under hypoxia, promoting nuclear localization and stabilization.

The protein localises to the nucleus. Phosphorylation-dependent transcription factor that stimulates transcription upon binding to the DNA cAMP response element (CRE), a sequence present in many viral and cellular promoters. Transcription activation is enhanced by the TORC coactivators which act independently of Ser-119 phosphorylation. Involved in different cellular processes including the synchronization of circadian rhythmicity and the differentiation of adipose cells. Regulates the expression of apoptotic and inflammatory response factors in cardiomyocytes in response to ERFE-mediated activation of AKT signaling. The protein is Cyclic AMP-responsive element-binding protein 1 (Creb1) of Rattus norvegicus (Rat).